The following is a 221-amino-acid chain: Stromal cell-derived factor 2-like protein 1 (221 aa).

The N-terminal stretch at Met1–Ala28 is a signal peptide. MIR domains lie at Ala33 to Gly87, Gly95 to Ser150, and Gly151 to Gly205. Residues His218–Leu221 carry the Prevents secretion from ER motif.

The protein resides in the endoplasmic reticulum lumen. The sequence is that of Stromal cell-derived factor 2-like protein 1 (SDF2L1) from Bos taurus (Bovine).